A 103-amino-acid polypeptide reads, in one-letter code: MQKIRKGDKVVVLTGKDKGRTGEVIQVMPKEDRAVVRGVNVVKRHQRQTQNQEAGIISKEAPIHLSNIAIADPKDGKPTRVGFKIDGEKKVRVAKRSGEVIDG.

Belongs to the universal ribosomal protein uL24 family. As to quaternary structure, part of the 50S ribosomal subunit.

Its function is as follows. One of two assembly initiator proteins, it binds directly to the 5'-end of the 23S rRNA, where it nucleates assembly of the 50S subunit. Functionally, one of the proteins that surrounds the polypeptide exit tunnel on the outside of the subunit. The sequence is that of Large ribosomal subunit protein uL24 from Sinorhizobium fredii (strain NBRC 101917 / NGR234).